The sequence spans 234 residues: Triosephosphate isomerase (234 aa).

Residue 8 to 10 (NFK) coordinates substrate. The active-site Electrophile is the His90. Glu159 functions as the Proton acceptor in the catalytic mechanism. Residues Gly165, Ser197, and 218–219 (GS) contribute to the substrate site.

As to quaternary structure, homodimer.

The protein resides in the cytoplasm. It carries out the reaction D-glyceraldehyde 3-phosphate = dihydroxyacetone phosphate. Its pathway is carbohydrate biosynthesis; gluconeogenesis. It participates in carbohydrate degradation; glycolysis; D-glyceraldehyde 3-phosphate from glycerone phosphate: step 1/1. Its function is as follows. Involved in the gluconeogenesis. Catalyzes stereospecifically the conversion of dihydroxyacetone phosphate (DHAP) to D-glyceraldehyde-3-phosphate (G3P). The polypeptide is Triosephosphate isomerase (Helicobacter pylori (strain ATCC 700392 / 26695) (Campylobacter pylori)).